We begin with the raw amino-acid sequence, 881 residues long: DNA mismatch repair protein MutS (881 aa).

Residue 612-619 (GPNMAGKS) coordinates ATP.

The protein belongs to the DNA mismatch repair MutS family.

This protein is involved in the repair of mismatches in DNA. It is possible that it carries out the mismatch recognition step. This protein has a weak ATPase activity. In Clostridium tetani (strain Massachusetts / E88), this protein is DNA mismatch repair protein MutS.